The following is a 562-amino-acid chain: Apyrase (562 aa).

The first 24 residues, 1–24, serve as a signal peptide directing secretion; the sequence is MAGRPGYSEVIFLYVVSVAVIARA. Residues Asp-47, His-49, and Asp-98 each contribute to the a divalent metal cation site. N-linked (GlcNAc...) asparagine glycosylation is present at Asn-112. 3 residues coordinate a divalent metal cation: Asn-130, His-233, and His-257. An AMP-binding site is contributed by Arg-370. An N-linked (GlcNAc...) asparagine glycan is attached at Asn-390. Residues Arg-405, Phe-424, and Asp-514 each contribute to the AMP site.

The protein belongs to the 5'-nucleotidase family. In terms of assembly, (Microbial infection) Interacts with Zika virus envelope protein E and Zika virus-like particles; the interaction does not affect Zika virus replication in human endothelial cells and keratinocytes. A divalent metal cation serves as cofactor. In terms of processing, the N-terminus is blocked. Female saliva (at protein level). Female salivary gland (at protein level). Not detected or low-level expression in female carcasses without salivary glands. Not detected in male tissues.

It localises to the secreted. The enzyme catalyses a ribonucleoside 5'-triphosphate + 2 H2O = a ribonucleoside 5'-phosphate + 2 phosphate + 2 H(+). Functionally, facilitates hematophagy by preventing ADP-, collagen- and thrombin-dependent platelet aggregation in the host. Cleaves adenosine triphosphate (ATP) and adenosine diphosphate (ADP) to adenosine monophosphate (AMP) and inorganic phosphate. May reduce probing time by facilitating the speed of locating blood. Its function is as follows. (Microbial infection) Does not affect Zika virus replication in human endothelial cells and keratinocytes. The polypeptide is Apyrase (Aedes aegypti (Yellowfever mosquito)).